A 394-amino-acid chain; its full sequence is Penicillopepsin-3 (394 aa).

A signal peptide spans 1–20; sequence MVSFTQLQLAFLGLSALGAA. The propeptide at 21–70 is activation peptide; sequence VPVTGTSEKKTFSLNQVKVAGTKTKNPAEHYANALRKYGAEVPSHVLAAA. A Peptidase A1 domain is found at 87-392; the sequence is YLTPIDVGGT…DASGPRLGFA (306 aa). Residues D103 and D284 contribute to the active site. C320 and C355 are joined by a disulfide.

It belongs to the peptidase A1 family. In terms of assembly, monomer.

It is found in the secreted. The enzyme catalyses Hydrolysis of proteins with broad specificity similar to that of pepsin A, preferring hydrophobic residues at P1 and P1', but also cleaving 20-Gly-|-Glu-21 in the B chain of insulin. Clots milk, and activates trypsinogen.. In terms of biological role, secreted aspartic endopeptidase that allows assimilation of proteinaceous substrates. The scissile peptide bond is attacked by a nucleophilic water molecule activated by two aspartic residues in the active site. Shows a broad primary substrate specificity. Favors hydrophobic residues at the P1 and P1' positions, but can also activate trypsinogen and hydrolyze the B chain of insulin between positions 'Gly-20' and 'Glu-21'. The chain is Penicillopepsin-3 from Penicillium janthinellum (Penicillium vitale).